The primary structure comprises 443 residues: MSEMTPREIVSELDSYIIGQHSAKRAVAIALRNRWRRMQLGEALRHEVTPKNILMIGPTGVGKTEIARRLAKLANAPFIKVEATKFTEVGYVGKEVDSIIRDLTDSAMKMIRAQSIEKNRYRAEEMAEERILDALIPPAKNNWGQTEQTNESSPARQTFRKKLREGELDDKEIEIELAASPMGVEIMAPPGMEEMTSQLQSMFQNLGGQKTKPRKVKIKDAFKQLIEEEAAKLVNPEELKQQAIDAVEQNGIVFIDEIDKICKRGESSGPDVSREGVQRDLLPLIEGCTVNTKHGMVKTDHILFIASGAFQVSSPADLIPELQGRLPIRVELQALTTEDFERILTEPSASLTEQYQALMATEGVNISFSADGIRRIAEAAWQVNESAENIGARRLHTVMERLMEEISFDASEMHGTAIAIDADYVRNHLDELVADEDLSRFIL.

ATP-binding positions include isoleucine 18, glycine 60–glutamate 65, aspartate 256, glutamate 321, and arginine 393.

This sequence belongs to the ClpX chaperone family. HslU subfamily. In terms of assembly, a double ring-shaped homohexamer of HslV is capped on each side by a ring-shaped HslU homohexamer. The assembly of the HslU/HslV complex is dependent on binding of ATP.

Its subcellular location is the cytoplasm. Functionally, ATPase subunit of a proteasome-like degradation complex; this subunit has chaperone activity. The binding of ATP and its subsequent hydrolysis by HslU are essential for unfolding of protein substrates subsequently hydrolyzed by HslV. HslU recognizes the N-terminal part of its protein substrates and unfolds these before they are guided to HslV for hydrolysis. The chain is ATP-dependent protease ATPase subunit HslU from Edwardsiella ictaluri (strain 93-146).